A 210-amino-acid polypeptide reads, in one-letter code: A-kinase-interacting protein 1 (210 aa).

2 disordered regions span residues 58–80 and 136–162; these read HLEK…ERPP and QRKD…EASQ.

As to quaternary structure, interacts with PRKACA and RELA. Expressed at high levels in adult heart and at lower levels in brain, testis, ovary and skeletal muscle. Up-regulated in some breast cancer cell lines. Isoform 1 and isoform 3 are expressed in fetal brain.

It is found in the nucleus. Its function is as follows. Enhances NF-kappa-B transcriptional activity by regulating the nuclear localization of the NF-kappa-B subunit RELA and promoting the phosphorylation of RELA by PRKACA. Regulates the effect of the cAMP-dependent protein kinase signaling pathway on the NF-kappa-B activation cascade. The polypeptide is A-kinase-interacting protein 1 (AKIP1) (Homo sapiens (Human)).